A 237-amino-acid polypeptide reads, in one-letter code: Protein FEV (237 aa).

The segment at residues 47–127 (IQLWQFLLEL…HGKRYAYRFD (81 aa)) is a DNA-binding region (ETS). The tract at residues 129–237 (QGLAQACQPP…AASHLGGHYH (109 aa)) is may mediate active transcriptional repression.

The protein belongs to the ETS family. In terms of tissue distribution, expressed in central serotonergic neurons.

The protein localises to the nucleus. In terms of biological role, functions as a transcriptional regulator. May function as a transcriptional repressor. Functions in the differentiation and the maintenance of the central serotonergic neurons. May play a role in cell growth. This chain is Protein FEV (Fev), found in Mus musculus (Mouse).